Consider the following 247-residue polypeptide: Ribonuclease 3 (247 aa).

The RNase III domain occupies 21 to 149; the sequence is VDHQPLLDHL…LFGAIFRQHG (129 aa). E62 contacts Mg(2+). D66 is an active-site residue. 2 residues coordinate Mg(2+): D135 and E138. E138 is a catalytic residue. The 69-residue stretch at 176-244 folds into the DRBM domain; it reads DWKTTLQEEL…AHQAFRKLRE (69 aa).

This sequence belongs to the ribonuclease III family. As to quaternary structure, homodimer. Mg(2+) is required as a cofactor.

It localises to the cytoplasm. It carries out the reaction Endonucleolytic cleavage to 5'-phosphomonoester.. Functionally, digests double-stranded RNA. Involved in the processing of primary rRNA transcript to yield the immediate precursors to the large and small rRNAs (23S and 16S). Processes some mRNAs, and tRNAs when they are encoded in the rRNA operon. Processes pre-crRNA and tracrRNA of type II CRISPR loci if present in the organism. The polypeptide is Ribonuclease 3 (Corynebacterium glutamicum (strain ATCC 13032 / DSM 20300 / JCM 1318 / BCRC 11384 / CCUG 27702 / LMG 3730 / NBRC 12168 / NCIMB 10025 / NRRL B-2784 / 534)).